Here is a 393-residue protein sequence, read N- to C-terminus: Riboflavin biosynthesis protein RibBA (393 aa).

The tract at residues Met1–Ser200 is DHBP synthase. Residues Arg27 to Glu28, Asp32, Arg139 to Thr143, and Glu163 contribute to the D-ribulose 5-phosphate site. Residue Glu28 participates in Mg(2+) binding. Position 142 (His142) interacts with Mg(2+). Residues Ser201–Ile393 are GTP cyclohydrolase II. Residue Arg249–Ala253 participates in GTP binding. Cys254, Cys265, and Cys267 together coordinate Zn(2+). GTP is bound by residues Gln270, Glu291–Arg293, and Thr313. Asp325 (proton acceptor; for GTP cyclohydrolase activity) is an active-site residue. Arg327 functions as the Nucleophile; for GTP cyclohydrolase activity in the catalytic mechanism. Residues Ser348 and Lys353 each contribute to the GTP site.

The protein in the N-terminal section; belongs to the DHBP synthase family. This sequence in the C-terminal section; belongs to the GTP cyclohydrolase II family. Mg(2+) serves as cofactor. It depends on Mn(2+) as a cofactor. Requires Zn(2+) as cofactor.

The enzyme catalyses D-ribulose 5-phosphate = (2S)-2-hydroxy-3-oxobutyl phosphate + formate + H(+). It carries out the reaction GTP + 4 H2O = 2,5-diamino-6-hydroxy-4-(5-phosphoribosylamino)-pyrimidine + formate + 2 phosphate + 3 H(+). The protein operates within cofactor biosynthesis; riboflavin biosynthesis; 2-hydroxy-3-oxobutyl phosphate from D-ribulose 5-phosphate: step 1/1. It functions in the pathway cofactor biosynthesis; riboflavin biosynthesis; 5-amino-6-(D-ribitylamino)uracil from GTP: step 1/4. Its function is as follows. Catalyzes the conversion of D-ribulose 5-phosphate to formate and 3,4-dihydroxy-2-butanone 4-phosphate. Functionally, catalyzes the conversion of GTP to 2,5-diamino-6-ribosylamino-4(3H)-pyrimidinone 5'-phosphate (DARP), formate and pyrophosphate. This is Riboflavin biosynthesis protein RibBA from Staphylococcus saprophyticus subsp. saprophyticus (strain ATCC 15305 / DSM 20229 / NCIMB 8711 / NCTC 7292 / S-41).